The sequence spans 189 residues: Peptidyl-tRNA hydrolase (189 aa).

Tyr-15 contributes to the tRNA binding site. His-20 acts as the Proton acceptor in catalysis. Residues Phe-66, Asn-68, and Asn-114 each contribute to the tRNA site.

This sequence belongs to the PTH family. In terms of assembly, monomer.

Its subcellular location is the cytoplasm. It carries out the reaction an N-acyl-L-alpha-aminoacyl-tRNA + H2O = an N-acyl-L-amino acid + a tRNA + H(+). In terms of biological role, hydrolyzes ribosome-free peptidyl-tRNAs (with 1 or more amino acids incorporated), which drop off the ribosome during protein synthesis, or as a result of ribosome stalling. Its function is as follows. Catalyzes the release of premature peptidyl moieties from peptidyl-tRNA molecules trapped in stalled 50S ribosomal subunits, and thus maintains levels of free tRNAs and 50S ribosomes. In Streptococcus pyogenes serotype M6 (strain ATCC BAA-946 / MGAS10394), this protein is Peptidyl-tRNA hydrolase.